We begin with the raw amino-acid sequence, 244 residues long: Phosphoadenosine 5'-phosphosulfate reductase (244 aa).

C239 acts as the Nucleophile; cysteine thiosulfonate intermediate in catalysis.

It belongs to the PAPS reductase family. CysH subfamily.

The protein localises to the cytoplasm. The enzyme catalyses [thioredoxin]-disulfide + sulfite + adenosine 3',5'-bisphosphate + 2 H(+) = [thioredoxin]-dithiol + 3'-phosphoadenylyl sulfate. It participates in sulfur metabolism; hydrogen sulfide biosynthesis; sulfite from sulfate: step 3/3. Functionally, catalyzes the formation of sulfite from phosphoadenosine 5'-phosphosulfate (PAPS) using thioredoxin as an electron donor. The protein is Phosphoadenosine 5'-phosphosulfate reductase of Buchnera aphidicola subsp. Acyrthosiphon pisum (strain 5A).